An 80-amino-acid chain; its full sequence is Protein FAM229B (80 aa).

The segment at 1-44 is disordered; sequence MPFQFGTQPRRFPVEGGDSSIELEPGLSSSAACNGKEMSPTRQL.

The protein belongs to the FAM229 family.

The chain is Protein FAM229B (FAM229B) from Homo sapiens (Human).